The chain runs to 938 residues: Protein translocase subunit SecA (938 aa).

ATP is bound by residues Gln90, 108–112 (GEGKT), and Asp504.

Belongs to the SecA family. In terms of assembly, monomer and homodimer. Part of the essential Sec protein translocation apparatus which comprises SecA, SecYEG and auxiliary proteins SecDF. Other proteins may also be involved.

The protein localises to the cell inner membrane. It is found in the cellular thylakoid membrane. The protein resides in the cytoplasm. It carries out the reaction ATP + H2O + cellular proteinSide 1 = ADP + phosphate + cellular proteinSide 2.. In terms of biological role, part of the Sec protein translocase complex. Interacts with the SecYEG preprotein conducting channel. Has a central role in coupling the hydrolysis of ATP to the transfer of proteins into and across the cell membrane, serving as an ATP-driven molecular motor driving the stepwise translocation of polypeptide chains across the membrane. Its function is as follows. Probably participates in protein translocation into and across both the cytoplasmic and thylakoid membranes in cyanobacterial cells. The protein is Protein translocase subunit SecA of Picosynechococcus sp. (strain ATCC 27264 / PCC 7002 / PR-6) (Agmenellum quadruplicatum).